The following is a 144-amino-acid chain: Large ribosomal subunit protein uL15 (144 aa).

A compositionally biased stretch (basic and acidic residues) spans 1–13; the sequence is MKLNELKPAEGSR. The segment at 1–47 is disordered; it reads MKLNELKPAEGSRKVRNRVGRGDSSGNGKTAGRGQKGQKARSKTRLG. The segment covering 23 to 35 has biased composition (gly residues); sequence DSSGNGKTAGRGQ.

The protein belongs to the universal ribosomal protein uL15 family. Part of the 50S ribosomal subunit.

Functionally, binds to the 23S rRNA. This Levilactobacillus brevis (strain ATCC 367 / BCRC 12310 / CIP 105137 / JCM 1170 / LMG 11437 / NCIMB 947 / NCTC 947) (Lactobacillus brevis) protein is Large ribosomal subunit protein uL15.